A 114-amino-acid polypeptide reads, in one-letter code: Snake venom vascular endothelial growth factor (114 aa).

Position 1 is a pyrrolidone carboxylic acid (Q1). 3 disulfide bridges follow: C14–C56, C45–C91, and C49–C93. The interval E92–R114 is disordered.

It belongs to the PDGF/VEGF growth factor family. Snake venom VEGF subfamily. In terms of assembly, homodimer; disulfide-linked. Interacts with human VEGF receptor 1/FLT1. Interacts with human VEGF receptor 2/KDR. As to expression, expressed by venom gland.

The protein resides in the secreted. In terms of biological role, snake venom vascular endothelial growth factor (svVEGF) that may contribute to venom dispersion and prey subjugation by inducing vascular permeability and hypotension. Induces an increase in capillary permeability after intradermal injection, as well as a drastic hypotensive effect after intravenous injection. The hypotension is mediated by nitric oxide (NO), which is produced by VEGF-activated endothelium NO synthase. Induces angiogenesis and migration of human vascular endothelial cells in vitro. Exhibits angiogenic activity by inducing human umbilical vein endothelial cells (HUVEC) to develop vessels in vitro. Induces cellular migration of HUVEC cells towards a wound in scratch assays, enhancing wound closure after 12 h by 49.5%. Induces dose-dependent leukocyte recruitment to the peritoneal cavity leading to increased vascular permeability in mice. This chain is Snake venom vascular endothelial growth factor, found in Crotalus durissus terrificus (South American rattlesnake).